The sequence spans 351 residues: Molybdenum import ATP-binding protein ModC (351 aa).

Residues 1–229 (MLQINVKKQL…PIFAPWKGES (229 aa)) form the ABC transporter domain. 31 to 38 (GLSGSGKT) lines the ATP pocket. A Mop domain is found at 289-351 (QTSIRNILRG…YVQIKAVSVM (63 aa)).

It belongs to the ABC transporter superfamily. Molybdate importer (TC 3.A.1.8) family. The complex is composed of two ATP-binding proteins (ModC), two transmembrane proteins (ModB) and a solute-binding protein (ModA).

The protein resides in the cell inner membrane. It carries out the reaction molybdate(out) + ATP + H2O = molybdate(in) + ADP + phosphate + H(+). Its function is as follows. Part of the ABC transporter complex ModABC involved in molybdenum import. Responsible for energy coupling to the transport system. The sequence is that of Molybdenum import ATP-binding protein ModC from Haemophilus influenzae (strain ATCC 51907 / DSM 11121 / KW20 / Rd).